Here is a 354-residue protein sequence, read N- to C-terminus: MEKFQAAMLLGAVGDALGFGHAARESSSLGARVQEEMGKGGGLDHLVLSPETWPVSDNTIMHMSTAGALITDFWCLDDLYREMVRRYVDVLEKLPEQRADPATLEGCSQLKPDNYLLAWHTPFNEKGSGFGAATKAMCVGMRYWQPERLETLVEVSVECGRMTHNHPTGFLGSLCTALFASYAVQGKRLEQWGRDMLRTVPLAEEYCKKTIRHLAEYQEHWFYFEAKWQFYLEERKIIEDTENEASFPDRYDAEEREKTYRKWSSEGRGGRRGHDAPMIAYDALLGAKGSWTELCRRAMFHGGESGATGAIAGCLFGLLHGLDAVPAGLYRELEHQDELRRLGEALHRLSSQEK.

Ser-27 is modified (phosphoserine).

It belongs to the ADP-ribosylglycohydrolase family.

The protein resides in the cytoplasm. It localises to the myofibril. The protein localises to the sarcomere. Required for myofibril assembly and outgrowth of the cardiac chambers in the developing heart. Appears to be catalytically inactive, showing no activity against O-acetyl-ADP-ribose. The protein is Inactive ADP-ribosyltransferase ARH2 (ADPRHL1) of Bos taurus (Bovine).